The chain runs to 272 residues: Prohibitin 1 (272 aa).

The stretch at 177-211 (KEFTEAVEMKQVAQQEAERARFIVEKAEQQKKAAV) forms a coiled coil.

The mitochondrial prohibitin complex consists of two subunits (PHB1 and PHB2), assembled into a membrane-associated ring-shaped supercomplex of approximately 1 mDa.

The protein resides in the mitochondrion inner membrane. It localises to the nucleus. Its subcellular location is the cytoplasm. It is found in the cell membrane. In terms of biological role, protein with pleiotropic attributes mediated in a cell-compartment- and tissue-specific manner, which include the plasma membrane-associated cell signaling functions, mitochondrial chaperone, and transcriptional co-regulator of transcription factors in the nucleus. Its function is as follows. In the mitochondria, together with PHB2, forms large ring complexes (prohibitin complexes) in the inner mitochondrial membrane (IMM) and functions as a chaperone protein that stabilizes mitochondrial respiratory enzymes and maintains mitochondrial integrity in the IMM, which is required for mitochondrial morphogenesis, neuronal survival, and normal lifespan. In the nucleus, acts as a transcription coregulator, enhances promoter binding by TP53, a transcription factor it activates, but reduces the promoter binding by E2F1, a transcription factor it represses. Functionally, in the plasma membrane, cooperates with CD86 to mediate CD86-signaling in B lymphocytes that regulates the level of IgG1 produced through the activation of distal signaling intermediates. Upon CD40 engagement, required to activate NF-kappa-B signaling pathway via phospholipase C and protein kinase C activation. This chain is Prohibitin 1 (PHB1), found in Gallus gallus (Chicken).